The primary structure comprises 148 residues: SsrA-binding protein (148 aa).

Positions 119-148 (AKGKKQHDKRETEKKRDWEREKARLMRSPG) are disordered. Residues 126–142 (DKRETEKKRDWEREKAR) are compositionally biased toward basic and acidic residues.

This sequence belongs to the SmpB family.

The protein resides in the cytoplasm. In terms of biological role, required for rescue of stalled ribosomes mediated by trans-translation. Binds to transfer-messenger RNA (tmRNA), required for stable association of tmRNA with ribosomes. tmRNA and SmpB together mimic tRNA shape, replacing the anticodon stem-loop with SmpB. tmRNA is encoded by the ssrA gene; the 2 termini fold to resemble tRNA(Ala) and it encodes a 'tag peptide', a short internal open reading frame. During trans-translation Ala-aminoacylated tmRNA acts like a tRNA, entering the A-site of stalled ribosomes, displacing the stalled mRNA. The ribosome then switches to translate the ORF on the tmRNA; the nascent peptide is terminated with the 'tag peptide' encoded by the tmRNA and targeted for degradation. The ribosome is freed to recommence translation, which seems to be the essential function of trans-translation. The sequence is that of SsrA-binding protein from Paraburkholderia xenovorans (strain LB400).